The chain runs to 92 residues: DNA-directed RNA polymerase subunit Rpo11 (92 aa).

This sequence belongs to the archaeal Rpo11/eukaryotic RPB11/RPC19 RNA polymerase subunit family. As to quaternary structure, part of the 13-subunit RNA polymerase complex.

It localises to the cytoplasm. The catalysed reaction is RNA(n) + a ribonucleoside 5'-triphosphate = RNA(n+1) + diphosphate. Functionally, DNA-dependent RNA polymerase (RNAP) catalyzes the transcription of DNA into RNA using the four ribonucleoside triphosphates as substrates. The polypeptide is DNA-directed RNA polymerase subunit Rpo11 (Saccharolobus solfataricus (strain ATCC 35092 / DSM 1617 / JCM 11322 / P2) (Sulfolobus solfataricus)).